A 149-amino-acid chain; its full sequence is Ribosomal RNA large subunit methyltransferase H (149 aa).

S-adenosyl-L-methionine-binding positions include leucine 71, glycine 98, and 117-122; that span reads LSKLTL.

This sequence belongs to the RNA methyltransferase RlmH family. Homodimer.

It localises to the cytoplasm. The enzyme catalyses pseudouridine(1915) in 23S rRNA + S-adenosyl-L-methionine = N(3)-methylpseudouridine(1915) in 23S rRNA + S-adenosyl-L-homocysteine + H(+). In terms of biological role, specifically methylates the pseudouridine at position 1915 (m3Psi1915) in 23S rRNA. In Campylobacter jejuni subsp. jejuni serotype O:6 (strain 81116 / NCTC 11828), this protein is Ribosomal RNA large subunit methyltransferase H.